The primary structure comprises 157 residues: Transcription factor HES-2 (157 aa).

The bHLH domain maps to 13 to 70; that stretch reads LRKSLKPLLEKRRRARINESLSQLKGLVLPLLGAETSRYSKLEKADILEMTVRFLREQ. The 34-residue stretch at 86–119 folds into the Orange domain; that stretch reads YLEGYRACLARLARVLPACSVLEPAVSARLLEHL. The disordered stretch occupies residues 124–157; that stretch reads VSGGPPSLTPASASAPAPSPPVPPPSSLGLWRPW. Positions 125–139 are enriched in low complexity; the sequence is SGGPPSLTPASASAP. Pro residues predominate over residues 140–149; that stretch reads APSPPVPPPS. The WRPW motif motif lies at 154–157; that stretch reads WRPW.

In terms of assembly, transcription repression requires formation of a complex with a corepressor protein of the Groucho/TLE family.

It localises to the nucleus. Functionally, transcriptional repressor of genes that require a bHLH protein for their transcription. In Rattus norvegicus (Rat), this protein is Transcription factor HES-2 (Hes2).